A 189-amino-acid chain; its full sequence is Notch ligand osm-11 (189 aa).

The first 18 residues, M1 to A18, serve as a signal peptide directing secretion.

May interact with lin-12/Notch receptor. Expressed in coelomocytes (at protein level).

Its subcellular location is the apical cell membrane. Functionally, probable secreted lin-12/Notch ligand or co-ligand involved in the mediation of Notch signaling. Involved in the lin-12/Notch pathway signaling of cell fate in vulval precursor cells (VPCs), acting redundantly with dsl-1 and lag-2. Required for normal octanol avoidance response, acting via both lin-12/Notch and glp-1/Notch signaling pathways in neurons, in concert with lag-2. Involved in regulation of sleep-like quiescence during the larval to adult transition, acting via Notch receptor activation and in parallel with EGF signaling. This chain is Notch ligand osm-11, found in Caenorhabditis elegans.